We begin with the raw amino-acid sequence, 197 residues long: Large ribosomal subunit protein bL9c (197 aa).

The transit peptide at Met1–Ser42 directs the protein to the chloroplast.

Belongs to the bacterial ribosomal protein bL9 family. In terms of assembly, part of the 50S ribosomal subunit.

The protein localises to the plastid. It is found in the chloroplast. Its function is as follows. Binds to the 23S rRNA. The chain is Large ribosomal subunit protein bL9c (RPL9) from Arabidopsis thaliana (Mouse-ear cress).